We begin with the raw amino-acid sequence, 980 residues long: Putative helicase 087L (980 aa).

A Helicase ATP-binding domain is found at 59–246 (INPHTLYDGV…IDLFNLILRT (188 aa)). 72–79 (HEMGTGKT) is an ATP binding site. Residues 189 to 192 (DEAH) carry the DEAH box motif. The region spanning 389-546 (RLSFVFSEFV…SIDLHMYEIA (158 aa)) is the Helicase C-terminal domain.

The protein belongs to the IIV-6 022L family. SNF2/RAD54 helicase subfamily.

In Invertebrate iridescent virus 3 (IIV-3), this protein is Putative helicase 087L.